We begin with the raw amino-acid sequence, 478 residues long: Multidrug resistance outer membrane protein MdtQ (478 aa).

Residues 1–21 (MNRDSFYPAIACFPLLLMLAG) form the signal peptide. The N-palmitoyl cysteine moiety is linked to residue C22. Residue C22 is the site of S-diacylglycerol cysteine attachment.

The protein belongs to the outer membrane factor (OMF) (TC 1.B.17) family.

The protein resides in the cell outer membrane. In terms of biological role, could be involved in resistance to puromycin, acriflavine and tetraphenylarsonium chloride. This chain is Multidrug resistance outer membrane protein MdtQ (mdtQ), found in Escherichia coli O6:H1 (strain CFT073 / ATCC 700928 / UPEC).